The chain runs to 565 residues: Putative ribonucleoside-diphosphate reductase large subunit (565 aa).

Residues S60, 74–75, G103, 256–260, and 400–404 each bind substrate; these read SC, NLCNE, and PNANS. C75 and C273 are joined by a disulfide. N256 (proton acceptor) is an active-site residue. Catalysis depends on C258, which acts as the Cysteine radical intermediate. Catalysis depends on E260, which acts as the Proton acceptor.

Belongs to the ribonucleoside diphosphate reductase large chain family. In terms of assembly, heterotetramer composed of a homodimer of the large subunit (R1) and a homodimer of the small subunit (R2). Larger multisubunit protein complex are also active, composed of (R1)n(R2)n.

It catalyses the reaction a 2'-deoxyribonucleoside 5'-diphosphate + [thioredoxin]-disulfide + H2O = a ribonucleoside 5'-diphosphate + [thioredoxin]-dithiol. Under complex allosteric control mediated by deoxynucleoside triphosphates and ATP binding. The type of nucleotide bound at the specificity site determines substrate preference. It seems probable that ATP makes the enzyme reduce CDP and UDP, dGTP favors ADP reduction and dTTP favors GDP reduction. Its function is as follows. Ribonucleoside-diphosphate reductase holoenzyme provides the precursors necessary for viral DNA synthesis. Allows virus growth in non-dividing cells. Catalyzes the biosynthesis of deoxyribonucleotides from the corresponding ribonucleotides. This Frog virus 3 (isolate Goorha) (FV-3) protein is Putative ribonucleoside-diphosphate reductase large subunit.